The sequence spans 273 residues: Putative pyruvate, phosphate dikinase regulatory protein (273 aa).

151-158 contacts ADP; sequence GVSRTSKT.

Belongs to the pyruvate, phosphate/water dikinase regulatory protein family. PDRP subfamily.

It carries out the reaction N(tele)-phospho-L-histidyl/L-threonyl-[pyruvate, phosphate dikinase] + ADP = N(tele)-phospho-L-histidyl/O-phospho-L-threonyl-[pyruvate, phosphate dikinase] + AMP + H(+). It catalyses the reaction N(tele)-phospho-L-histidyl/O-phospho-L-threonyl-[pyruvate, phosphate dikinase] + phosphate + H(+) = N(tele)-phospho-L-histidyl/L-threonyl-[pyruvate, phosphate dikinase] + diphosphate. Its function is as follows. Bifunctional serine/threonine kinase and phosphorylase involved in the regulation of the pyruvate, phosphate dikinase (PPDK) by catalyzing its phosphorylation/dephosphorylation. In Desulfitobacterium hafniense (strain DSM 10664 / DCB-2), this protein is Putative pyruvate, phosphate dikinase regulatory protein.